Consider the following 130-residue polypeptide: ATP synthase epsilon chain, chloroplastic (130 aa).

Belongs to the ATPase epsilon chain family. In terms of assembly, F-type ATPases have 2 components, CF(1) - the catalytic core - and CF(0) - the membrane proton channel. CF(1) has five subunits: alpha(3), beta(3), gamma(1), delta(1), epsilon(1). CF(0) has three main subunits: a, b and c.

Its subcellular location is the plastid. The protein localises to the chloroplast thylakoid membrane. Its function is as follows. Produces ATP from ADP in the presence of a proton gradient across the membrane. The protein is ATP synthase epsilon chain, chloroplastic of Emiliania huxleyi (Coccolithophore).